A 200-amino-acid polypeptide reads, in one-letter code: MSLLIERARYHLSAHNVRQLPPDEGAEVAFAGRSNAGKSSALNALTRQNALARVSKTPGRTQQLVFFQVTPEAHLVDLPGYGYAKVPLDLQAHWQAFIDKYFRTREALKGLVVVMDIRHPLKDYDRQMLSYAVQRGLPAHALLTKADKLSRSQQMQSLQKVRKELQSAYGDSVSVQVFSGEDRTGVDEARGVIGGWLGLE.

Positions 24 to 199 constitute an EngB-type G domain; it reads EGAEVAFAGR…RGVIGGWLGL (176 aa). GTP is bound by residues 32-39, 59-63, 77-80, 144-147, and 178-180; these read GRSNAGKS, GRTQQ, DLPG, TKAD, and FSG. Positions 39 and 61 each coordinate Mg(2+).

Belongs to the TRAFAC class TrmE-Era-EngA-EngB-Septin-like GTPase superfamily. EngB GTPase family. Mg(2+) is required as a cofactor.

Its function is as follows. Necessary for normal cell division and for the maintenance of normal septation. The sequence is that of Probable GTP-binding protein EngB from Stenotrophomonas maltophilia (strain K279a).